A 417-amino-acid polypeptide reads, in one-letter code: NADH-quinone oxidoreductase subunit D (417 aa).

Belongs to the complex I 49 kDa subunit family. NDH-1 is composed of 14 different subunits. Subunits NuoB, C, D, E, F, and G constitute the peripheral sector of the complex.

It is found in the cell inner membrane. The catalysed reaction is a quinone + NADH + 5 H(+)(in) = a quinol + NAD(+) + 4 H(+)(out). NDH-1 shuttles electrons from NADH, via FMN and iron-sulfur (Fe-S) centers, to quinones in the respiratory chain. The immediate electron acceptor for the enzyme in this species is believed to be ubiquinone. Couples the redox reaction to proton translocation (for every two electrons transferred, four hydrogen ions are translocated across the cytoplasmic membrane), and thus conserves the redox energy in a proton gradient. This Cupriavidus taiwanensis (strain DSM 17343 / BCRC 17206 / CCUG 44338 / CIP 107171 / LMG 19424 / R1) (Ralstonia taiwanensis (strain LMG 19424)) protein is NADH-quinone oxidoreductase subunit D.